A 266-amino-acid chain; its full sequence is Glucosamine-6-phosphate deaminase (266 aa).

Residue aspartate 72 is the Proton acceptor; for enolization step of the active site. Aspartate 141 serves as the catalytic For ring-opening step. Residue histidine 143 is the Proton acceptor; for ring-opening step of the active site. The active-site For ring-opening step is glutamate 148.

This sequence belongs to the glucosamine/galactosamine-6-phosphate isomerase family. NagB subfamily. In terms of assembly, homohexamer.

The enzyme catalyses alpha-D-glucosamine 6-phosphate + H2O = beta-D-fructose 6-phosphate + NH4(+). Its pathway is amino-sugar metabolism; N-acetylneuraminate degradation; D-fructose 6-phosphate from N-acetylneuraminate: step 5/5. Allosterically activated by N-acetylglucosamine 6-phosphate (GlcNAc6P). Catalyzes the reversible isomerization-deamination of glucosamine 6-phosphate (GlcN6P) to form fructose 6-phosphate (Fru6P) and ammonium ion. This is Glucosamine-6-phosphate deaminase from Yersinia pseudotuberculosis serotype O:1b (strain IP 31758).